A 154-amino-acid chain; its full sequence is Proteasome subunit beta type-4 (154 aa).

An N-acetylmethionine modification is found at Met-1. A propeptide spanning residues 1 to 45 (MESILESRSGHWAGGPAPGQFYRIPPTPGSIVDPXSVLYGSPITR) is cleaved from the precursor. A Phosphotyrosine modification is found at Tyr-102.

It belongs to the peptidase T1B family. As to quaternary structure, the 26S proteasome consists of a 20S proteasome core and two 19S regulatory subunits. The 20S proteasome core is a barrel-shaped complex made of 28 subunits that are arranged in four stacked rings. The two outer rings are each formed by seven alpha subunits, and the two inner rings are formed by seven beta subunits. The proteolytic activity is exerted by three beta-subunits PSMB5, PSMB6 and PSMB7. Forms a ternary complex with SMAD1 and OAZ1 before PSMB4 is incorporated into the 20S proteasome. Interacts with PRPF19.

The protein resides in the cytoplasm. It localises to the nucleus. Functionally, non-catalytic component of the 20S core proteasome complex involved in the proteolytic degradation of most intracellular proteins. This complex plays numerous essential roles within the cell by associating with different regulatory particles. Associated with two 19S regulatory particles, forms the 26S proteasome and thus participates in the ATP-dependent degradation of ubiquitinated proteins. The 26S proteasome plays a key role in the maintenance of protein homeostasis by removing misfolded or damaged proteins that could impair cellular functions, and by removing proteins whose functions are no longer required. Associated with the PA200 or PA28, the 20S proteasome mediates ubiquitin-independent protein degradation. This type of proteolysis is required in several pathways including spermatogenesis (20S-PA200 complex) or generation of a subset of MHC class I-presented antigenic peptides (20S-PA28 complex). SMAD1/OAZ1/PSMB4 complex mediates the degradation of the CREBBP/EP300 repressor SNIP1. The chain is Proteasome subunit beta type-4 (PSMB4) from Sus scrofa (Pig).